The following is a 209-amino-acid chain: Urease accessory protein UreG (209 aa).

Residue 11 to 18 (GPVGSGKT) coordinates GTP.

The protein belongs to the SIMIBI class G3E GTPase family. UreG subfamily. As to quaternary structure, homodimer. UreD, UreF and UreG form a complex that acts as a GTP-hydrolysis-dependent molecular chaperone, activating the urease apoprotein by helping to assemble the nickel containing metallocenter of UreC. The UreE protein probably delivers the nickel.

The protein resides in the cytoplasm. Facilitates the functional incorporation of the urease nickel metallocenter. This process requires GTP hydrolysis, probably effectuated by UreG. The polypeptide is Urease accessory protein UreG (Edwardsiella ictaluri (strain 93-146)).